Reading from the N-terminus, the 435-residue chain is MAKVLKSSQSCHFPSPSSSSSTSCGGGNDGSNRDPHSPFNISRREEEEEEEERSEKERERFELSSALEILVSAIRRSVIGGCVGEEDLCSMEIGVPTDVRHVAHVTFDRFHGFLGLPVEFEPEVPRRAPSASATVFGVSTESMQLSYDTRGNIVPTILLMMQSHLYSRGGLRVEGIFRINGENGQEEYIREELNKGIIPDNIDVHCLASLIKAWFRELPSGVLDSLSPEQVMESESEDECVELVRLLPSTEASLLDWAINLMADVVEMEQLNKMNARNIAMVFAPNMTQMLDPLTALMYAVQVMNFLKTLIVKTLKDRKESRDKLVPASNPSPRDHNGDQSSSRQLLHLMKANKEETLDNFEAEMKDKEESADEEEEECAESVELVDIKKSSLVNNSSGGFGQKHIGWEEQRTMSKASSIVGRVNYRVELFEAWR.

Residues 1 to 59 (MAKVLKSSQSCHFPSPSSSSSTSCGGGNDGSNRDPHSPFNISRREEEEEEEERSEKERE) are disordered. The span at 7–23 (SSQSCHFPSPSSSSSTS) shows a compositional bias: low complexity. One can recognise a CRIB domain in the interval 93 to 106 (IGVPTDVRHVAHVT). Positions 138 to 319 (VSTESMQLSY…LIVKTLKDRK (182 aa)) constitute a Rho-GAP domain. Residues 321–343 (SRDKLVPASNPSPRDHNGDQSSS) are disordered.

In terms of biological role, acts as a GTPase activator for the Rac-type GTPase by converting it to an inactive GDP-bound state. Acts as a negative feedback regulator in tolerance to oxygen deprivation which requires ARAC4/ROP2. The chain is Rho GTPase-activating protein 4 (ROPGAP4) from Arabidopsis thaliana (Mouse-ear cress).